Consider the following 167-residue polypeptide: Envelope glycoprotein L (167 aa).

A signal peptide spans 1 to 20 (MGIFALFAVLWTTLLVTSHA). The interaction with gH stretch occupies residues 18–131 (SHAYVALPCC…ADSSIHNVNI (114 aa)). Positions 142–154 (RTGSVSGSQTRAK) are enriched in polar residues. A disordered region spans residues 142–167 (RTGSVSGSQTRAKSSSRRAHAGQKGK). Residues 155–167 (SSSRRAHAGQKGK) are compositionally biased toward basic residues.

The protein belongs to the herpesviridae glycoprotein L family. Interacts with glycoprotein H (gH); this interaction is necessary for the correct processing and cell surface expression of gH. The heterodimer gH/gL seems to interact with gB trimers during fusion. When in complex with gH, interacts with host EPHA2; this interaction triggers EPHA2 phosphorylation and endocytosis, allowing virus entry.

The protein localises to the virion membrane. It is found in the host cell membrane. It localises to the host Golgi apparatus. The protein resides in the host trans-Golgi network. In terms of biological role, the heterodimer glycoprotein H-glycoprotein L is required for the fusion of viral and plasma membranes leading to virus entry into the host cell. Acts as a functional inhibitor of gH and maintains gH in an inhibited form. Upon binding to host integrins, gL dissociates from gH leading to activation of the viral fusion glycoproteins gB and gH. Targets heparan sulfate proteoglycans of the syndecan family as well as host EPHA2 to promote viral entry. The polypeptide is Envelope glycoprotein L (Human herpesvirus 8 type P (isolate GK18) (HHV-8)).